A 486-amino-acid polypeptide reads, in one-letter code: 6-phosphogluconate dehydrogenase, decarboxylating 2 (486 aa).

NADP(+) contacts are provided by residues Gly12–Gly17, Asn35–Thr37, Val79–Ala81, and Asn107. Substrate-binding positions include Asn107 and Ser133 to Gly135. Lys188 acts as the Proton acceptor in catalysis. Residue His191 to Asn192 coordinates substrate. Glu195 functions as the Proton donor in the catalytic mechanism. Substrate is bound by residues Tyr196, Lys266, Arg293, Arg456, and His462. The short motif at Ser484–Ile486 is the Microbody targeting signal element.

Belongs to the 6-phosphogluconate dehydrogenase family. As to quaternary structure, forms homodimer. Forms heterodimers with PGD1 or PGD3.

It is found in the cytoplasm. It localises to the cytosol. Its subcellular location is the peroxisome. The catalysed reaction is 6-phospho-D-gluconate + NADP(+) = D-ribulose 5-phosphate + CO2 + NADPH. The protein operates within carbohydrate degradation; pentose phosphate pathway; D-ribulose 5-phosphate from D-glucose 6-phosphate (oxidative stage): step 3/3. Its function is as follows. Catalyzes the oxidative decarboxylation of 6-phosphogluconate to ribulose 5-phosphate and CO(2), with concomitant reduction of NADP to NADPH. Required for guided growth of the male gametophytes and interaction between the pollen tube and the ovule. In Arabidopsis thaliana (Mouse-ear cress), this protein is 6-phosphogluconate dehydrogenase, decarboxylating 2.